A 528-amino-acid polypeptide reads, in one-letter code: D-3-phosphoglycerate dehydrogenase (528 aa).

NAD(+) is bound by residues 151-152 (RI), aspartate 171, 230-232 (AAR), and aspartate 256. Residue arginine 232 is part of the active site. Residue glutamate 261 is part of the active site. Histidine 279 (proton donor) is an active-site residue. 279 to 282 (HLGA) serves as a coordination point for NAD(+). The 74-residue stretch at 455–528 (NLVIRYVDQP…ANKLEVVNLS (74 aa)) folds into the ACT domain.

It belongs to the D-isomer specific 2-hydroxyacid dehydrogenase family.

It catalyses the reaction (2R)-3-phosphoglycerate + NAD(+) = 3-phosphooxypyruvate + NADH + H(+). The enzyme catalyses (R)-2-hydroxyglutarate + NAD(+) = 2-oxoglutarate + NADH + H(+). It functions in the pathway amino-acid biosynthesis; L-serine biosynthesis; L-serine from 3-phospho-D-glycerate: step 1/3. Catalyzes the reversible oxidation of 3-phospho-D-glycerate to 3-phosphonooxypyruvate, the first step of the phosphorylated L-serine biosynthesis pathway. Also catalyzes the reversible oxidation of 2-hydroxyglutarate to 2-oxoglutarate. The chain is D-3-phosphoglycerate dehydrogenase (serA) from Mycobacterium leprae (strain TN).